We begin with the raw amino-acid sequence, 933 residues long: 2-oxoglutarate dehydrogenase E1 component (933 aa).

It belongs to the alpha-ketoglutarate dehydrogenase family. As to quaternary structure, homodimer. Part of the 2-oxoglutarate dehydrogenase (OGDH) complex composed of E1 (2-oxoglutarate dehydrogenase), E2 (dihydrolipoamide succinyltransferase) and E3 (dihydrolipoamide dehydrogenase); the complex contains multiple copies of the three enzymatic components (E1, E2 and E3). Interacts (via N-terminus) with SucB, the E2 component of OGDH complex. Requires thiamine diphosphate as cofactor.

The enzyme catalyses N(6)-[(R)-lipoyl]-L-lysyl-[protein] + 2-oxoglutarate + H(+) = N(6)-[(R)-S(8)-succinyldihydrolipoyl]-L-lysyl-[protein] + CO2. Its function is as follows. E1 component of the 2-oxoglutarate dehydrogenase (OGDH) complex which catalyzes the decarboxylation of 2-oxoglutarate, the first step in the conversion of 2-oxoglutarate to succinyl-CoA and CO(2). The chain is 2-oxoglutarate dehydrogenase E1 component (sucA) from Escherichia coli O157:H7.